The following is a 189-amino-acid chain: dCTP deaminase (189 aa).

DCTP-binding positions include Lys-112–Arg-117, Thr-136–Glu-138, Gln-157, Tyr-171, and Gln-181. The active-site Proton donor/acceptor is Glu-138.

It belongs to the dCTP deaminase family. In terms of assembly, homotrimer.

The catalysed reaction is dCTP + H2O + H(+) = dUTP + NH4(+). Its pathway is pyrimidine metabolism; dUMP biosynthesis; dUMP from dCTP (dUTP route): step 1/2. Its function is as follows. Catalyzes the deamination of dCTP to dUTP. This chain is dCTP deaminase, found in Halorhodospira halophila (strain DSM 244 / SL1) (Ectothiorhodospira halophila (strain DSM 244 / SL1)).